The chain runs to 245 residues: Uridylate kinase (245 aa).

Residue 15 to 18 (KLSG) coordinates ATP. The segment at 23–28 (GDEGFG) is involved in allosteric activation by GTP. UMP is bound at residue Gly57. The ATP site is built by Gly58 and Arg62. UMP-binding positions include Asp77 and 138–145 (TGNPFCTT). The ATP site is built by Thr165, Tyr171, and Asp174.

Belongs to the UMP kinase family. In terms of assembly, homohexamer.

Its subcellular location is the cytoplasm. The catalysed reaction is UMP + ATP = UDP + ADP. It functions in the pathway pyrimidine metabolism; CTP biosynthesis via de novo pathway; UDP from UMP (UMPK route): step 1/1. Allosterically activated by GTP. Inhibited by UTP. Functionally, catalyzes the reversible phosphorylation of UMP to UDP. The chain is Uridylate kinase from Shewanella baltica (strain OS155 / ATCC BAA-1091).